The sequence spans 55 residues: Large ribosomal subunit protein bL33 (55 aa).

The protein belongs to the bacterial ribosomal protein bL33 family.

The chain is Large ribosomal subunit protein bL33 from Bifidobacterium longum (strain DJO10A).